The sequence spans 249 residues: Proteasome activator complex subunit 1 (249 aa).

The disordered stretch occupies residues 55-102; it reads SNLKAPLDIPVPDPVKEKEKEERRKQQEKEDKDEKKKGEDEDKGPPCG. Over residues 68–98 the composition is skewed to basic and acidic residues; it reads PVKEKEKEERRKQQEKEDKDEKKKGEDEDKG.

It belongs to the PA28 family. In terms of assembly, heterodimer of PSME1 and PSME2, which forms a hexameric ring. PSME1 can form homoheptamers.

In terms of biological role, implicated in immunoproteasome assembly and required for efficient antigen processing. The PA28 activator complex enhances the generation of class I binding peptides by altering the cleavage pattern of the proteasome. The polypeptide is Proteasome activator complex subunit 1 (PSME1) (Bos taurus (Bovine)).